Consider the following 208-residue polypeptide: V-type ATP synthase subunit D (208 aa).

It belongs to the V-ATPase D subunit family.

Functionally, produces ATP from ADP in the presence of a proton gradient across the membrane. This chain is V-type ATP synthase subunit D, found in Streptococcus pyogenes serotype M6 (strain ATCC BAA-946 / MGAS10394).